Reading from the N-terminus, the 1450-residue chain is Arf-GAP with Rho-GAP domain, ANK repeat and PH domain-containing protein 1 (1450 aa).

The SAM domain maps to 6–70 (DAALSVAEWL…LAGLLRAHTS (65 aa)). The interval 81–90 (PVPMKRHIFR) is required for interaction with SH3KBP1. 2 disordered regions span residues 89 to 144 (FRSP…LPPL) and 173 to 302 (TKEE…SSLS). The segment covering 92–102 (PPVPATPPEPL) has biased composition (pro residues). Residues 190 to 199 (QSEEPLSTLP) are compositionally biased toward low complexity. Residues 200–219 (QGPPQPPSPPPCPPEIPPKP) show a composition bias toward pro residues. Acidic residues-rich tracts occupy residues 225–236 (EFDDSDYDEVPE) and 269–286 (EGEE…EDDH). Serine 229 carries the phosphoserine modification. Tyrosine 231 is modified (phosphotyrosine; by PTK6). One can recognise a PH 1 domain in the interval 327 to 419 (PVIKAGWLDK…WMQALQQAMA (93 aa)). At threonine 354 the chain carries Phosphothreonine. Serine 428 bears the Phosphoserine mark. Tyrosine 431 and tyrosine 504 each carry phosphotyrosine. The PH 2 domain maps to 440 to 529 (QPDRAGSLEL…WLEAMQGAIA (90 aa)). Residues 535 to 660 (SEVAERIWAA…RYHPLFGNQE (126 aa)) enclose the Arf-GAP domain. The C4-type zinc-finger motif lies at 550-576 (CADCGAPQPDWASINLCVVICKRCAGE). A Phosphoserine modification is found at serine 738. Positions 743–850 (TVSHSGFLYK…WVKCIAKAFV (108 aa)) constitute a PH 3 domain. A Rho-GAP domain is found at 954 to 1139 (ASMGDTLSEQ…DLINHYVVVF (186 aa)). The region spanning 1172–1261 (GDFICTVYLE…SHLVVKKHQA (90 aa)) is the Ras-associating domain. A PH 4 domain is found at 1274-1396 (GDTKHGMMKF…WFATFLFVQH (123 aa)). Phosphoserine occurs at positions 1428 and 1435.

Interacts with SH3KBP1/CIN85 (via SH3 domains). The interaction is independent of EGF and does not affect ARAP1 GTPase-activating activity but is involved in regulating ubiquitination and endocytic trafficking of EGFR. ARAP1 competes with E3 ubiquitin-protein ligase CBL for binding to SH3KBP1, preventing interaction of CBL with SH3KBP1; this is likely to regulate SH3KBP1-mediated internalization of EGFR. Interacts with TNFRSF10A. Phosphorylated by PTK6 following EGF stimulation which enhances EGFR signaling by delaying EGFR down-regulation; the interaction is mediated by the SH2 domain of PTK6. Phosphorylation promotes association with the Golgi apparatus and endosomes. Detected in heart, skeletal muscle, spleen, kidney, liver, placenta, lung, peripheral blood leukocytes, adrenal gland, bone marrow, brain, lymph node, mammary gland, prostate, spinal cord, stomach, thyroid and trachea.

Its subcellular location is the cytoplasm. It is found in the golgi apparatus. It localises to the trans-Golgi network. The protein localises to the golgi stack. The protein resides in the cell membrane. Its subcellular location is the endosome. It is found in the multivesicular body. It localises to the cell projection. The protein localises to the ruffle. The protein resides in the podosome. Its subcellular location is the early endosome. In terms of biological role, phosphatidylinositol 3,4,5-trisphosphate-dependent GTPase-activating protein that modulates actin cytoskeleton remodeling by regulating ARF and RHO family members. Activated by phosphatidylinositol 3,4,5-trisphosphate (PtdIns(3,4,5)P3) binding and, to a lesser extent, by phosphatidylinositol 3,4-bisphosphate (PtdIns(3,4)P2) binding. Has a preference for ARF1 and ARF5. Positively regulates the ring size of circular dorsal ruffles and promotes macropinocytosis. Acts as a bridging factor in osteoclasts to control actin and membrane dynamics. Regulates the condensing of osteoclast podosomes into sealing zones which segregate the bone-facing membrane from other membrane domains and are required for osteoclast resorption activity. Also regulates recruitment of the AP-3 complex to endosomal membranes and trafficking of lysosomal membrane proteins to the ruffled membrane border of osteoclasts to modulate bone resorption. Regulates the endocytic trafficking of EGFR. Regulates the incorporation of CD63 and CD9 into multivesicular bodies. Required in the retinal pigment epithelium (RPE) for photoreceptor survival due to its role in promoting RPE phagocytosis. The polypeptide is Arf-GAP with Rho-GAP domain, ANK repeat and PH domain-containing protein 1 (ARAP1) (Homo sapiens (Human)).